We begin with the raw amino-acid sequence, 539 residues long: BTB/POZ domain-containing protein 6 (539 aa).

The signal sequence occupies residues 1 to 23 (MLLPLACLHGRVAQCLTSLLVLA). In terms of domain architecture, BTB spans 137–207 (ADVHFIVGAL…MYSDEIDLEA (71 aa)).

Its subcellular location is the cytoplasm. Adapter protein for the cul3 E3 ubiquitin-protein ligase complex. Involved in late neuronal development and muscle formation. The polypeptide is BTB/POZ domain-containing protein 6 (Btbd6) (Mus musculus (Mouse)).